The primary structure comprises 270 residues: MAVITKIEVQKRSKERFNIYIDKGQGEEYGFSVNEVILIKHGLQKGLEIDEIALGNILYNEEVQKAYLQAISYLSYQMRTKLEIEDFLRKKEVGQAIISEVVSKLLHDRYINDKEYAILYTRTQSNVNRKGPTVIKRELLNKGVQDLIITHSLQEYPKEKQIENALILIEKKKKSYQKHSFLQMKLKLDEMLVRKGYSRDVIQICLEELKDEKDDEKQQEALHYHGNKYYEKYKKYDGWTLENKMKQALYRKGFSIDEIEIFLQMKREEG.

The protein belongs to the RecX family.

The protein resides in the cytoplasm. Its function is as follows. Modulates RecA activity. The chain is Regulatory protein RecX from Bacillus cereus (strain 03BB102).